The following is a 210-amino-acid chain: MRRLPWLIPFFLVNISNGNNEFRIEFEYPNNEKSEKCFDSSKENDLLDLFYVSTNPLGPVVECRFLENSFILCEDPVPLYGPGQTGQQPANESFRNEGKCLKMGGYRAEDVEFTNVKCRVLPCIECHGPRTFTKSTPCIIYNGHYFLTTLLYSIFLGVVAVDRFCLGYSAMAVGKLMTLGGFGIWWIVDIFLLVLGVLGPADDSSWEPYY.

The signal sequence occupies residues 1–18 (MRRLPWLIPFFLVNISNG). Over 19–138 (NNEFRIEFEY…PRTFTKSTPC (120 aa)) the chain is Extracellular. A glycan (N-linked (GlcNAc...) asparagine) is linked at N91. Residues 139–159 (IIYNGHYFLTTLLYSIFLGVV) traverse the membrane as a helical segment. The TM2 domain maps to 143-191 (GHYFLTTLLYSIFLGVVAVDRFCLGYSAMAVGKLMTLGGFGIWWIVDIF). The Cytoplasmic portion of the chain corresponds to 160 to 178 (AVDRFCLGYSAMAVGKLMT). The chain crosses the membrane as a helical span at residues 179 to 199 (LGGFGIWWIVDIFLLVLGVLG). At 200 to 210 (PADDSSWEPYY) the chain is on the extracellular side.

This sequence belongs to the TM2 family.

The protein localises to the membrane. The sequence is that of TM2 domain-containing protein C02F5.13 from Caenorhabditis elegans.